A 560-amino-acid polypeptide reads, in one-letter code: Choline/ethanolamine transporter FLVCR1 (560 aa).

Positions 1 to 43 (MARPDDEVGPAVAPGHPLGKGYLPVPKGAPDGEARLVPQNGPE) are disordered. The Cytoplasmic portion of the chain corresponds to 1–92 (MARPDDEVGP…EDVPCPACPP (92 aa)). A helical transmembrane segment spans residues 93 to 117 (RTALSPRRFVVLLIFSLYSLVNAFQ). The Extracellular segment spans residues 118 to 135 (WIQYSSISNVFEDFYEVS). A helical transmembrane segment spans residues 136 to 163 (PLHINWLSMVYMVAYVPLIFPATWLLDT). The Cytoplasmic segment spans residues 164–165 (RG). The helical transmembrane segment at 166-185 (LRLTALLGSGLNCLGAWVKC) threads the bilayer. The Extracellular portion of the chain corresponds to 186–192 (GSVQRHL). Residues 193–221 (FWVTMLGQILCSVAQVFILGLPSPVASVW) form a helical membrane-spanning segment. An ethanolamine-binding site is contributed by Gln-207. Over 222–226 (FGPKE) the chain is Cytoplasmic. The helical transmembrane segment at 227–252 (VSTACATAVLGNQLGTAVGFLLPPVL) threads the bilayer. At 253 to 270 (VPALGTQNSTGLLAHTQN) the chain is on the extracellular side. The N-linked (GlcNAc...) asparagine glycan is linked to Asn-270. Residues 271-300 (NTDLLAHNINTMFYGTAFISTFLFFLTIIA) traverse the membrane as a helical segment. Residues 301-336 (FKEKPPLPPSQAQAVLRDSPPEEYSYKSSIWNLCRN) are Cytoplasmic-facing. A helical transmembrane segment spans residues 337–367 (IPFVLLLVSYGIMTGAFYSISTLLNQIILTY). Topologically, residues 368-371 (YVGE) are extracellular. A helical transmembrane segment spans residues 372–400 (EVNAGRIGLTLVVAGMVGSILCGLWLDYT). At 401-402 (KT) the chain is on the cytoplasmic side. A helical transmembrane segment spans residues 403–425 (YKQTTLIVYVLSFIGMLIFTFTL). Residues 426–428 (NLG) are Extracellular-facing. The chain crosses the membrane as a helical span at residues 429–458 (YIIVVFFTGGILGFFMTGYLPLGFEFAVEI). Residues 459–466 (TYPESEGM) lie on the Cytoplasmic side of the membrane. Residues 467-492 (SSGLLNTAAQILGIFFTLAQGKITTD) form a helical membrane-spanning segment. Gln-476 contacts ethanolamine. Gln-476 is a binding site for choline. Topologically, residues 493–495 (YNS) are extracellular. The chain crosses the membrane as a helical span at residues 496–518 (PEAGNIFLCAWMFVGIILTALIK). The Cytoplasmic segment spans residues 519-560 (SDLRRHNINTGLTNIDVKAVPVDSRVDPKPKVMVSIQSESSL). Phosphoserine is present on Ser-542.

This sequence belongs to the major facilitator superfamily. Feline leukemia virus subgroup C receptor (TC 2.A.1.28.1) family.

The protein resides in the cell membrane. The protein localises to the mitochondrion membrane. The enzyme catalyses choline(out) = choline(in). It carries out the reaction ethanolamine(in) = ethanolamine(out). The catalysed reaction is heme b(in) = heme b(out). In terms of biological role, uniporter that mediates the transport of extracellular choline and ethanolamine into cells, thereby playing a key role in phospholipid biosynthesis. Choline and ethanolamine are the precursors of phosphatidylcholine and phosphatidylethanolamine, respectively, the two most abundant phospholipids. Transport is not coupled with proton transport and is exclusively driven by the choline (or ethanolamine) gradient across the plasma membrane. Also acts as a heme b transporter that mediates heme efflux from the cytoplasm to the extracellular compartment. Functionally, uniporter that mediates the transport of extracellular choline and ethanolamine into cells. Choline and ethanolamine are the precursors of phosphatidylcholine and phosphatidylethanolamine, respectively, the two most abundant phospholipids. Transport is not coupled with proton transport and is exclusively driven by the choline (or ethanolamine) gradient across the plasma membrane. Also acts as a heme b transporter that mediates heme efflux from the cytoplasm to the extracellular compartment. Heme export depends on the presence of HPX and is required to maintain intracellular free heme balance, protecting cells from heme toxicity. Heme export provides protection from heme or ferrous iron toxicities in liver, brain, sensory neurons and during erythropoiesis, a process in which heme synthesis intensifies. Possibly export coproporphyrin and protoporphyrin IX, which are both intermediate products in the heme biosynthetic pathway. Does not export bilirubin. The molecular mechanism of heme transport, whether electrogenic, electroneutral or coupled to other ions, remains to be elucidated. Its function is as follows. Heme transporter that promotes heme efflux from the mitochondrion to the cytoplasm. Essential for erythroid differentiation. This chain is Choline/ethanolamine transporter FLVCR1 (Flvcr1), found in Mus musculus (Mouse).